The sequence spans 240 residues: Uridylate kinase (240 aa).

Residue 12-15 participates in ATP binding; that stretch reads KLSG. Residues 20-25 are involved in allosteric activation by GTP; it reads GDQGYG. Gly-54 lines the UMP pocket. ATP is bound by residues Gly-55 and Arg-59. UMP contacts are provided by residues Asp-74 and 135–142; that span reads TGNPYFST. ATP is bound by residues Asn-163, Tyr-169, and Asp-172.

This sequence belongs to the UMP kinase family. As to quaternary structure, homohexamer.

Its subcellular location is the cytoplasm. It catalyses the reaction UMP + ATP = UDP + ADP. It participates in pyrimidine metabolism; CTP biosynthesis via de novo pathway; UDP from UMP (UMPK route): step 1/1. Its activity is regulated as follows. Allosterically activated by GTP. Inhibited by UTP. Functionally, catalyzes the reversible phosphorylation of UMP to UDP. The sequence is that of Uridylate kinase from Oceanobacillus iheyensis (strain DSM 14371 / CIP 107618 / JCM 11309 / KCTC 3954 / HTE831).